A 203-amino-acid chain; its full sequence is Glutathione S-transferase (203 aa).

One can recognise a GST N-terminal domain in the interval 2-79 (PDYKVYYFNV…YLANQVGLAG (78 aa)). Residues tyrosine 8, tryptophan 39, lysine 43, 49–51 (GQM), and 63–64 (QS) contribute to the glutathione site. A GST C-terminal domain is found at 81-203 (DDWENLMIDT…YIAKRPITEV (123 aa)).

This sequence belongs to the GST superfamily. Sigma family. As to quaternary structure, homodimer.

The enzyme catalyses RX + glutathione = an S-substituted glutathione + a halide anion + H(+). In terms of biological role, conjugation of reduced glutathione to a wide number of exogenous and endogenous hydrophobic electrophiles. The chain is Glutathione S-transferase (GstS1) from Anopheles gambiae (African malaria mosquito).